The sequence spans 375 residues: Transaldolase (375 aa).

The active-site Schiff-base intermediate with substrate is K145.

This sequence belongs to the transaldolase family. Type 2 subfamily.

Its subcellular location is the cytoplasm. The enzyme catalyses D-sedoheptulose 7-phosphate + D-glyceraldehyde 3-phosphate = D-erythrose 4-phosphate + beta-D-fructose 6-phosphate. It participates in carbohydrate degradation; pentose phosphate pathway; D-glyceraldehyde 3-phosphate and beta-D-fructose 6-phosphate from D-ribose 5-phosphate and D-xylulose 5-phosphate (non-oxidative stage): step 2/3. Functionally, transaldolase is important for the balance of metabolites in the pentose-phosphate pathway. The chain is Transaldolase from Mycobacterium leprae (strain Br4923).